Here is a 183-residue protein sequence, read N- to C-terminus: dTDP-4-dehydrorhamnose 3,5-epimerase (183 aa).

Residues R24, E29, 48 to 50 (QDN), and R60 each bind substrate. H63 functions as the Proton acceptor in the catalytic mechanism. The substrate site is built by K73 and H120. Residue Y133 is the Proton donor of the active site. Substrate contacts are provided by E144 and K169.

It belongs to the dTDP-4-dehydrorhamnose 3,5-epimerase family. Homodimer.

The catalysed reaction is dTDP-4-dehydro-6-deoxy-alpha-D-glucose = dTDP-4-dehydro-beta-L-rhamnose. It participates in carbohydrate biosynthesis; dTDP-L-rhamnose biosynthesis. The protein operates within bacterial outer membrane biogenesis; LPS O-antigen biosynthesis. Its function is as follows. Catalyzes the epimerization of the C3' and C5'positions of dTDP-6-deoxy-D-xylo-4-hexulose, forming dTDP-6-deoxy-L-lyxo-4-hexulose. The polypeptide is dTDP-4-dehydrorhamnose 3,5-epimerase (Salmonella typhimurium (strain LT2 / SGSC1412 / ATCC 700720)).